We begin with the raw amino-acid sequence, 885 residues long: Pyruvate, phosphate dikinase (885 aa).

The tract at residues 1–342 (MQRVYAFEDG…LYMLQTRNGK (342 aa)) is N-terminal. Residue arginine 91 coordinates ATP. The interval 343–399 (MNATATVRTGVDMVEEGLITKEQAIMRIAPQSVDQLLHKNMPANYAEAPLVKGLPAS) is linker 1. The tract at residues 400 to 497 (PGAATGAVVF…EVHEGDILTI (98 aa)) is central. Histidine 454 (tele-phosphohistidine intermediate) is an active-site residue. A linker 2 region spans residues 498–533 (DGSTGCVYKGEVPLEEPQVGSGYFGTILKWANEIKK). The segment at 534–885 (IGVFANADLP…QAQIRHPREN (352 aa)) is C-terminal. Positions 561, 617, 752, 773, 774, 775, and 776 each coordinate substrate. Glutamate 752 provides a ligand contact to Mg(2+). Aspartate 776 serves as a coordination point for Mg(2+). The active-site Proton donor is cysteine 839.

Belongs to the PEP-utilizing enzyme family. As to quaternary structure, homodimer. Requires Mg(2+) as cofactor.

It catalyses the reaction pyruvate + phosphate + ATP = phosphoenolpyruvate + AMP + diphosphate + H(+). Functionally, catalyzes the dephosphorylation of phosphoenolpyruvate and diphosphate to produce ATP. In Entamoeba histolytica (strain ATCC 30459 / HM-1:IMSS / ABRM), this protein is Pyruvate, phosphate dikinase.